The following is a 985-amino-acid chain: Vacuolar membrane protease (985 aa).

Residues 1 to 20 (MASSRAQRFNPIAFTPWPVT) are Cytoplasmic-facing. A helical transmembrane segment spans residues 21 to 41 (CITTIVYLALLIPILVINLVV). The Vacuolar portion of the chain corresponds to 42–388 (PSAPETNPKG…MFGTAFAVFR (347 aa)). N-linked (GlcNAc...) asparagine glycosylation is found at N53, N116, and N119. 2 residues coordinate Zn(2+): H175 and D187. The Proton acceptor role is filled by E221. E222 contacts Zn(2+). N-linked (GlcNAc...) asparagine glycosylation occurs at N238. Residues E247 and H320 each coordinate Zn(2+). Residues 389–409 (LHTLFAISVALLVIAPLVIFV) traverse the membrane as a helical segment. Over 410-440 (TNRMYLFSMSKSLEGTGDQVSLRGLRGFSRT) the chain is Cytoplasmic. A helical transmembrane segment spans residues 441 to 461 (PIILVTATTIPICLAYLLEKV). Over 462–470 (NPYIVHSSQ) the chain is Vacuolar. A helical membrane pass occupies residues 471 to 491 (FSVWSMMFSAWIFLAWFLACA). Residues 492–502 (ADFFRPSALHR) lie on the Cytoplasmic side of the membrane. A helical membrane pass occupies residues 503-523 (AYSYTWIFIATWIMLVINTVY). The Vacuolar portion of the chain corresponds to 524–527 (ANQK). A helical membrane pass occupies residues 528–548 (GIAAGYFLLFYFAGAFLATWI). Topologically, residues 549 to 666 (SYLELFALPR…TLPRWTWVLQ (118 aa)) are cytoplasmic. The disordered stretch occupies residues 563–612 (ARQTTGRRPSSLSSRLLTSSADELRSNASPSTAEFPGAAGEDTDPTESTS). Over residues 566–582 (TTGRRPSSLSSRLLTSS) the composition is skewed to low complexity. Residues 667-687 (LLLLAPIVLILVGQLALFLTA) traverse the membrane as a helical segment. The Vacuolar portion of the chain corresponds to 688–700 (SMCQVGSDGVSTF). Residues 701 to 721 (VVYLACAVFTTLLCIPLFPLI) traverse the membrane as a helical segment. Residues 722–727 (HRFTYH) lie on the Cytoplasmic side of the membrane. A helical membrane pass occupies residues 728-748 (IPTFLFLVFIGTLIYNLVAFP). Residues 749 to 985 (FSPANRLKTF…VEASHSFTIQ (237 aa)) are Vacuolar-facing. N767, N795, and N839 each carry an N-linked (GlcNAc...) asparagine glycan.

This sequence belongs to the peptidase M28 family. Requires Zn(2+) as cofactor.

It localises to the vacuole membrane. May be involved in vacuolar sorting and osmoregulation. This is Vacuolar membrane protease from Ajellomyces capsulatus (strain G186AR / H82 / ATCC MYA-2454 / RMSCC 2432) (Darling's disease fungus).